Here is an 867-residue protein sequence, read N- to C-terminus: MFFEILIGASAKAVKDFISHCYSRLKSIYYSFKRWLMEISGQFKAHDAFVNMCFGHMADIEDFEAELAEEFAEREDEVEEARSLLKLLVAQKSKSGVTEAWTDFFTKSRGGVYAPLSCEPTRQELEVKSEKLERLLEEQHQFEVRAAKKYIKEKGRGFINCWNDLRSRLRLVKDVKDEAKDNARAAAKIGAEMFAPVDVQDLYSFTEVKKVETGLMKEVVKEKNGEEEKHLEPIMEEVRSIKDTAEARDAASTWITETVKLKNATLNADELSLATIARYVENVGDKFKLDIASKTYLKQVASMSVPIPTNKDIKLKMVLQSPEARARRERMDVLDSVGFLEGLCTASGFESPFPILGLPEIAVTDGARLRKVSSNIRYLSQTHLGLVYKAPNASLHNALVAVERRVFTVGKGDKAIYPPRPEHDIFTDTMDYFQKSIIEEVGYCKTYPAQLLANSYSAGKRAMYHKAIASLKTVPYHQKDANVQAFLKKEKHWMTKDIAPRLICPRSKRYNIILGTRLKFNEKKIMHAIDSVFGSPTVLSGYDNFKQGRIIAKKWQKFACPVAIGVDASRFDQHVSEQALKWEHGIYNGIFGDSEMALALEHQITNNIKMFVEDKMLRFKVRGHRMSGDINTSMGNKLIMCGMMHAYLKKLGVEAELCNNGDDCVIITDRANEKLFDGMYDHFLQYGFNMVTEKPVYELEQLEFCQSKPVSINGKYRMVRRPDSIGKDSTTLLSMLNQSDVKSYMSAVAQCGLVLNAGVPILESFYKCLYRSSGYKKVSEEFIKNVISYGTDERLQGRRTYNETPITNHSRMSYWESFGVDPKIQQIVERYYDGLTVSAQLQSVKVTTPHLQSILLSIPENHSQNEY.

Residues Pro-561–Phe-676 enclose the RdRp catalytic domain.

It belongs to the luteoviruses RNA polymerase family.

It catalyses the reaction RNA(n) + a ribonucleoside 5'-triphosphate = RNA(n+1) + diphosphate. Its function is as follows. Probable polymerase. The protein is Putative RNA-directed RNA polymerase of Avena byzantina (Oat).